The sequence spans 295 residues: ATP synthase gamma chain (295 aa).

It belongs to the ATPase gamma chain family. As to quaternary structure, F-type ATPases have 2 components, CF(1) - the catalytic core - and CF(0) - the membrane proton channel. CF(1) has five subunits: alpha(3), beta(3), gamma(1), delta(1), epsilon(1). CF(0) has three main subunits: a, b and c.

It is found in the cell membrane. Its function is as follows. Produces ATP from ADP in the presence of a proton gradient across the membrane. The gamma chain is believed to be important in regulating ATPase activity and the flow of protons through the CF(0) complex. This Desulforudis audaxviator (strain MP104C) protein is ATP synthase gamma chain.